Reading from the N-terminus, the 1024-residue chain is Hemolysin, plasmid (1024 aa).

Positions 20 to 32 are enriched in polar residues; sequence AANKLHSAGQSTK. The interval 20–39 is disordered; sequence AANKLHSAGQSTKDALKKAA. 3 consecutive transmembrane segments (helical) span residues 238 to 260, 268 to 327, and 365 to 411; these read IGAGLDTVSGILSAISASFILSN, KAAA…LSIA, and DASL…GILE. N6-myristoyl lysine attachment occurs at residues lysine 564 and lysine 690. 6 Hemolysin-type calcium-binding repeats span residues 732 to 749, 750 to 767, 768 to 785, 786 to 803, 816 to 833, and 834 to 851; these read FGSKFTDIFHGADGDDLI, EGNDGNDRLYGDKGNDTL, SGGNGDDQLYGGDGNDKL, IGVAGNNYLNGGDGDDEF, FGGKGNDKLYGSEGADLL, and DGGEGDDLLKGGYGNDIY.

Belongs to the RTX prokaryotic toxin (TC 1.C.11) family. Myristoylated by HlyC; the toxin only becomes active when modified. Mainly myristoylated, while a minor fraction is acylated with pentadecanoyl (C15:0; 26%) and heptadecanoyl (C17:0; 6%) fatty acyl groups. Fatty acylation is involved in binding to host membranes and promotes the irreversible insertion of Hemolysin into the host cell membrane. Can be activated by both myristoylation and palmitoylation, but HlyC catalyzes lysine myristoylation.

The protein localises to the secreted. The protein resides in the host cell membrane. Bacterial hemolysins are exotoxins that attack blood cell membranes and cause cell rupture by forming a pore. The sequence is that of Hemolysin, plasmid from Escherichia coli.